Consider the following 274-residue polypeptide: Undecaprenyl-diphosphatase (274 aa).

A run of 8 helical transmembrane segments spans residues 6 to 26 (SLFI…LPVS), 45 to 65 (AKTF…VMFW), 94 to 114 (GHIL…HDVI), 117 to 137 (LFAP…LLAA), 155 to 174 (YRQA…PGFS), 191 to 211 (YAAA…ASGL), 223 to 243 (GDLP…LIAI), and 253 to 273 (ISFV…YMVF).

Belongs to the UppP family.

The protein resides in the cell inner membrane. It carries out the reaction di-trans,octa-cis-undecaprenyl diphosphate + H2O = di-trans,octa-cis-undecaprenyl phosphate + phosphate + H(+). In terms of biological role, catalyzes the dephosphorylation of undecaprenyl diphosphate (UPP). Confers resistance to bacitracin. This chain is Undecaprenyl-diphosphatase, found in Serratia proteamaculans (strain 568).